The primary structure comprises 273 residues: MEIRTFLERALKEDLGHGDLFERVLEKDFKATAFVRAKQEGVFSGEKYALELLEMTGIECVQTIKDKERFKPKDALMEIRGDFSMLLKVERTLLNLLQHSSGIATLTSRFVEALNSHKVRLLDTRKTRPLLRIFEKYSVLNGGASNHRLGLDDALMLKDTHLRHVKDLKSFLTHARKNLPFTAKIEIECESFEEAKNAMNAGADIVMCDNLSVLETKEIAAYRDAHYPFVLLEASGNISLESINAYAKSGVDAISVGALIHQATFIDMHMKMA.

Residues arginine 91, 124 to 126 (TRK), arginine 148, lysine 158, glutamate 188, aspartate 209, 235 to 237 (SGN), and 256 to 258 (VGA) contribute to the substrate site.

This sequence belongs to the NadC/ModD family. In terms of assembly, hexamer formed by 3 homodimers.

The enzyme catalyses nicotinate beta-D-ribonucleotide + CO2 + diphosphate = quinolinate + 5-phospho-alpha-D-ribose 1-diphosphate + 2 H(+). The protein operates within cofactor biosynthesis; NAD(+) biosynthesis; nicotinate D-ribonucleotide from quinolinate: step 1/1. Functionally, involved in the catabolism of quinolinic acid (QA). This is Probable nicotinate-nucleotide pyrophosphorylase [carboxylating] (nadC) from Helicobacter pylori (strain ATCC 700392 / 26695) (Campylobacter pylori).